Here is a 439-residue protein sequence, read N- to C-terminus: MGDKPTIAISHLGCEKNRIDTEHMLGMLVEAGYGVDTNEELADYVIVNTCSFIEAARQESVRTLVELAEANKKIVITGCMAQHFQEQLLEELPEAVAVVGTGDYHKIVNVIERVELGERVKQVSIEPTYIADETTPRYRTTTEGVAYLRVAEGCDYRCAFCIIPHLRGNQRSRTIESIVAEAEQLVSQGVKEIILISQITTNYGLDIYGKPKLAELLRALGKVDIPWIRMHYAYPTGLTPDAIAAIQETPNVLPYLDLPLQHSHPDILRAMNRPWQGRVNDGIIDRIKTALPTAVLRTTFIVGFPGETQEHFEHLLEFVQRHEFDHVGVFTFSSEEGTPAYKLPNQLAQEVMDDRRYQLMELQQPISQKKNQQEVGKIVDVLIEQENPESGELIGRSGRFSPEVDGLVYVKGQAKLGTIVPVAIHHADTYDLYGQVVNN.

The MTTase N-terminal domain occupies 5 to 116; the sequence is PTIAISHLGC…IVNVIERVEL (112 aa). Cys14, Cys50, Cys79, Cys154, Cys158, and Cys161 together coordinate [4Fe-4S] cluster. The region spanning 140–369 is the Radical SAM core domain; that stretch reads TTTEGVAYLR…MELQQPISQK (230 aa). Residues 372–438 form the TRAM domain; the sequence is QQEVGKIVDV…TYDLYGQVVN (67 aa).

The protein belongs to the methylthiotransferase family. RimO subfamily. The cofactor is [4Fe-4S] cluster.

It localises to the cytoplasm. The enzyme catalyses L-aspartate(89)-[ribosomal protein uS12]-hydrogen + (sulfur carrier)-SH + AH2 + 2 S-adenosyl-L-methionine = 3-methylsulfanyl-L-aspartate(89)-[ribosomal protein uS12]-hydrogen + (sulfur carrier)-H + 5'-deoxyadenosine + L-methionine + A + S-adenosyl-L-homocysteine + 2 H(+). Its function is as follows. Catalyzes the methylthiolation of an aspartic acid residue of ribosomal protein uS12. This is Ribosomal protein uS12 methylthiotransferase RimO from Nostoc punctiforme (strain ATCC 29133 / PCC 73102).